The following is a 476-amino-acid chain: Protein DETOXIFICATION 3 (476 aa).

Transmembrane regions (helical) follow at residues 35-55 (AAPM…SVMV), 66-86 (GVAL…FGLA), 117-137 (IPIC…LISL), 146-166 (VAGS…FFIP), 185-205 (LTTL…FGLG), 208-228 (GAAM…SCYV), 260-280 (AAMV…SGLL), 289-309 (VLSI…GVAA), 331-351 (VLAG…LLFT), 370-390 (VANL…TAVL), 402-422 (IGAL…GVYL), and 433-453 (LWCG…FVTA).

The protein belongs to the multi antimicrobial extrusion (MATE) (TC 2.A.66.1) family.

It is found in the membrane. The chain is Protein DETOXIFICATION 3 from Arabidopsis thaliana (Mouse-ear cress).